A 511-amino-acid polypeptide reads, in one-letter code: 2-isopropylmalate synthase (511 aa).

A Pyruvate carboxyltransferase domain is found at 4 to 266; that stretch reads IDIFDTTLRD…ETGIQLQEIK (263 aa). Mn(2+)-binding residues include Asp13, His201, His203, and Asn237. Residues 392-511 form a regulatory domain region; the sequence is ELKMVQVQYG…IKESLRAHPV (120 aa).

This sequence belongs to the alpha-IPM synthase/homocitrate synthase family. LeuA type 1 subfamily. Homodimer. It depends on Mn(2+) as a cofactor.

It localises to the cytoplasm. It catalyses the reaction 3-methyl-2-oxobutanoate + acetyl-CoA + H2O = (2S)-2-isopropylmalate + CoA + H(+). The protein operates within amino-acid biosynthesis; L-leucine biosynthesis; L-leucine from 3-methyl-2-oxobutanoate: step 1/4. Its function is as follows. Catalyzes the condensation of the acetyl group of acetyl-CoA with 3-methyl-2-oxobutanoate (2-ketoisovalerate) to form 3-carboxy-3-hydroxy-4-methylpentanoate (2-isopropylmalate). The protein is 2-isopropylmalate synthase of Lysinibacillus sphaericus (strain C3-41).